Here is a 358-residue protein sequence, read N- to C-terminus: ATPase ASNA1 homolog (358 aa).

35 to 42 (KGGVGKTT) contributes to the ATP binding site. Aspartate 64 is a catalytic residue. ATP is bound by residues glutamate 235 and asparagine 262.

Belongs to the arsA ATPase family. Homodimer.

The protein localises to the cytoplasm. The protein resides in the endoplasmic reticulum. Functionally, ATPase required for the post-translational delivery of tail-anchored (TA) proteins to the endoplasmic reticulum. Recognizes and selectively binds the transmembrane domain of TA proteins in the cytosol. This complex then targets to the endoplasmic reticulum by membrane-bound receptors, where the tail-anchored protein is released for insertion. This process is regulated by ATP binding and hydrolysis. ATP binding drives the homodimer towards the closed dimer state, facilitating recognition of newly synthesized TA membrane proteins. ATP hydrolysis is required for insertion. Subsequently, the homodimer reverts towards the open dimer state, lowering its affinity for the membrane-bound receptor, and returning it to the cytosol to initiate a new round of targeting. This Babesia bovis protein is ATPase ASNA1 homolog.